A 2260-amino-acid chain; its full sequence is Reducing polyketide synthase pksF (2260 aa).

The region spanning V20–D445 is the Ketosynthase family 3 (KS3) domain. Catalysis depends on for beta-ketoacyl synthase activity residues C194, H329, and H368. A malonyl-CoA:ACP transacylase (MAT) domain region spans residues F598–G933. Catalysis depends on S689, which acts as the For malonyltransferase activity. An N-terminal hotdog fold region spans residues H984–R1121. A dehydratase (DH) domain region spans residues H984 to A1281. Residues H984 to S1306 enclose the PKS/mFAS DH domain. Catalysis depends on H1016, which acts as the Proton acceptor; for dehydratase activity. Positions R1150–S1306 are C-terminal hotdog fold. The active-site Proton donor; for dehydratase activity is the D1216. The enoylreductase (ER) domain stretch occupies residues G1544 to I1859. The segment at P1882–V2104 is ketoreductase (KR) domain. In terms of domain architecture, Carrier spans Q2174–S2251. At S2211 the chain carries O-(pantetheine 4'-phosphoryl)serine.

It depends on pantetheine 4'-phosphate as a cofactor.

Functionally, reducing polyketide synthase that catalyzes the formation of a C22 intermediate attached to the ACP. Release by intramolecular hydrolysis by the enolized delta-carbonyl would give the pyrone product aslanipyrone. Alternatively, KR-mediated reduction of the beta-carbonyl of the C22 intermediate would form a beta-hydroxy thioester intermediate, which could be a substrate for a further KS-mediated condensation of an additional C2 unit to form a C24 intermediate, which cyclizes by aldol condensation followed by decarboxylation to form aslaniol. Neither aslanipyrone, aslaniol, nor their derivatives have been detected in A.solani, probably due to a low abundance and/or extensive post-PKS modification. It is assumed that the branching point from C22 to C24 is the result of KR activity on the C22 intermediate anchored to the ACP. The sequence is that of Reducing polyketide synthase pksF from Alternaria solani.